A 99-amino-acid polypeptide reads, in one-letter code: Integration host factor subunit alpha (99 aa).

This sequence belongs to the bacterial histone-like protein family. Heterodimer of an alpha and a beta chain.

In terms of biological role, this protein is one of the two subunits of integration host factor, a specific DNA-binding protein that functions in genetic recombination as well as in transcriptional and translational control. The chain is Integration host factor subunit alpha (ihfA) from Xylella fastidiosa (strain 9a5c).